A 351-amino-acid chain; its full sequence is Putative ABC transporter permease protein MJ0876 (351 aa).

9 consecutive transmembrane segments (helical) span residues 4 to 24 (VGIL…ALYL), 59 to 79 (LPPI…GLML), 99 to 119 (VLMV…FEIF), 124 to 144 (ILVA…IIAL), 152 to 172 (VIIV…YLIA), 196 to 216 (GDVI…MFLI), 249 to 269 (FITG…IIAP), 284 to 304 (LVPA…ILSL), and 322 to 342 (PLPI…YLVY).

Belongs to the binding-protein-dependent transport system permease family. FecCD subfamily.

The protein resides in the cell membrane. Its function is as follows. Probably part of a binding-protein-dependent transport system. Probably responsible for the translocation of the substrate across the membrane. This is Putative ABC transporter permease protein MJ0876 from Methanocaldococcus jannaschii (strain ATCC 43067 / DSM 2661 / JAL-1 / JCM 10045 / NBRC 100440) (Methanococcus jannaschii).